The following is an 835-amino-acid chain: Protein translocase subunit SecA 1 (835 aa).

ATP contacts are provided by residues Gln85, 103-107, and Asp492; that span reads GEGKT. Residues 788–807 are disordered; sequence VQGEAVHPSSDGEEAKKKPV. Zn(2+) is bound by residues Cys819, Cys821, Cys830, and Cys831.

It belongs to the SecA family. Monomer and homodimer. Part of the essential Sec protein translocation apparatus which comprises SecA, SecYEG and auxiliary proteins SecDF. Other proteins may also be involved. Requires Zn(2+) as cofactor.

The protein resides in the cell membrane. It is found in the cytoplasm. It carries out the reaction ATP + H2O + cellular proteinSide 1 = ADP + phosphate + cellular proteinSide 2.. Part of the Sec protein translocase complex. Interacts with the SecYEG preprotein conducting channel. Has a central role in coupling the hydrolysis of ATP to the transfer of proteins into and across the cell membrane, serving as an ATP-driven molecular motor driving the stepwise translocation of polypeptide chains across the membrane. The chain is Protein translocase subunit SecA 1 from Bacillus thuringiensis (strain Al Hakam).